The primary structure comprises 319 residues: High mobility group B protein 10 (319 aa).

Polar residues predominate over residues 1-13 (MSTDISPPYSQTH). Residues 1–25 (MSTDISPPYSQTHVEPVNGYPSDNK) form a disordered region. The ARID domain occupies 40 to 131 (VRNSALFWEK…FLFQLEHVYY (92 aa)). Residues 203 to 220 (PSQSQQTMETPSAIVQSS) show a composition bias toward polar residues. Residues 203–230 (PSQSQQTMETPSAIVQSSQRRHRKKSKL) are disordered. The HMG box DNA-binding region spans 238–305 (PKCHRSGYNF…RYRIEMLEYK (68 aa)).

As to expression, ubiquitously expressed.

The protein resides in the nucleus. In terms of biological role, binds preferentially DNA with A/T-rich content. The protein is High mobility group B protein 10 (HMGB10) of Arabidopsis thaliana (Mouse-ear cress).